The following is a 745-amino-acid chain: MTKVSSLGYPRLGENREWKKLIEAYWAGKVSKNDLFAGAKELRLDFLKKQLNAGLDLIPVGDFSLYDHILDLSVQFNIIPKRFAKEPIDIDLYFAIARGNKENVASSMKKWFNTNYHYIVPEWSKQRPKLNNNRLLDLYLEAREVVGDKAKPVITGPITYVALSTGVEDFTAAVKSLLPLYKQVFTELVKAGASYIQVDEPIFVTDEGKDYLQAAKAVYAYFAKEVPDAKFIFQTYFEGLIDSQVLSQLPVDAFGLDFVYGLEENLEAIKTGAFKGKEIFAGVIDGRNIWSSDFVKTSALLETIEEQSAALTIQPSCSLLHVPVTTKNETDLDPVLRNGLAFADEKLTEVKRLAEHLDGREDPAYDLHIAHFDALQAADFRNVKLEDLSRVATKRPSDFAKRRDIQQEKLHLPLLPTTTIGSFPQSREIRRTRLAWKRGDISDAEYKQFIQAEIERWIRIQEDLDLDVLVHGEFERVDMVEFFGQKLAGFTTTKFGWVQSYGSRAVKPPIIYGDVQHLEPITVEETVYAQSLTDRPVKGMLTGPITITNWSFERTDIPRDQLFNQIGLAIKDEIKLLENAGIAIIQVDEAALREGLPLRKSKQKAYLDDAVHAFHIATSSVKDETQIHTHMCYSKFDEIIDAIRALDADVISIETSRSHGDIIESFETAVYPLGIGLGVYDIHSPRVPTKEEVVANIERPLRQLSPTQFWVNPDCGLKTRQEPETIAALKVLVAATKEVRQKLGN.

5-methyltetrahydropteroyltri-L-glutamate is bound by residues Lys-19 and Asn-115. Residues 420–422 and Glu-473 contribute to the L-homocysteine site; that span reads IGS. L-methionine contacts are provided by residues 420–422 and Glu-473; that span reads IGS. 5-methyltetrahydropteroyltri-L-glutamate is bound by residues Asp-478, Tyr-501, 504-505, and Trp-550; that span reads RA. Asp-588 lines the L-homocysteine pocket. Asp-588 is an L-methionine binding site. Residues His-630, Cys-632, and Glu-654 each contribute to the Zn(2+) site. Residue His-683 is the Proton donor of the active site. A Zn(2+)-binding site is contributed by Cys-715.

This sequence belongs to the vitamin-B12 independent methionine synthase family. Requires Zn(2+) as cofactor.

It catalyses the reaction 5-methyltetrahydropteroyltri-L-glutamate + L-homocysteine = tetrahydropteroyltri-L-glutamate + L-methionine. Its pathway is amino-acid biosynthesis; L-methionine biosynthesis via de novo pathway; L-methionine from L-homocysteine (MetE route): step 1/1. Functionally, catalyzes the transfer of a methyl group from 5-methyltetrahydrofolate to homocysteine resulting in methionine formation. The chain is 5-methyltetrahydropteroyltriglutamate--homocysteine methyltransferase from Streptococcus mutans serotype c (strain ATCC 700610 / UA159).